The sequence spans 702 residues: MNSLFASTARGLEELLKTELENLGAVECQVVQGGVHFKGDTRLVYQSLMWSRLASRIMLPLGECKVYSDLDLYLGVQAINWTEMFNPGATFAVHFSGLNDTIRNSQYGAMKVKDAIVDAFTRKNLPRPNVDRDAPDIRVNVWLHKETASIALDLSGDGLHLRGYRDRAGIAPIKETLAAAIVMRTGWQPGTPLLDPMCGSGTLLIEAAMLATDRAPGLHRGRWGFSGWVQHDEAIWQEVKAEAQTRARKGLAEYSSHFYGSDSDARVIQRARTNARLAGIGELITFEVKDVAQLTNPLPKGPYGTVLSNPPYGERLDSEPALIALHSLLGRIMKNQFGGWNLSLFSASPDLLSCLQLRADKQYKAKNGPLDCVQKNYHVAESTPDSKPAMVAEDYANRLRKNLKKFEKWARQEGIECYRLYDADLPEYNVAVDRYADWVVVQEYAPPKTIDAHKARQRLFDIIAATISVLGIAPNKLVLKTRERQKGKNQYQKLGEKGEFLEVTEYNAHLWVNLTDYLDTGLFLDHRIARRMLGQMSKGKDFLNLFSYTGSATVHAGLGGARSTTTVDMSRTYLEWAERNLRLNGLTGRAHRLIQADCLAWLREANEQFDLIFIDPPTFSNSKRMEDAFDVQRDHMALMKDLKRLLRAGGTIMFSNNKRGFRMDLDGLAKLGLKAQEITQKTLSQDFARNRQIHNCWLITAA.

The region spanning 43-154 (LVYQSLMWSR…KETASIALDL (112 aa)) is the THUMP domain.

It belongs to the methyltransferase superfamily. RlmKL family.

Its subcellular location is the cytoplasm. It catalyses the reaction guanosine(2445) in 23S rRNA + S-adenosyl-L-methionine = N(2)-methylguanosine(2445) in 23S rRNA + S-adenosyl-L-homocysteine + H(+). The catalysed reaction is guanosine(2069) in 23S rRNA + S-adenosyl-L-methionine = N(2)-methylguanosine(2069) in 23S rRNA + S-adenosyl-L-homocysteine + H(+). Specifically methylates the guanine in position 2445 (m2G2445) and the guanine in position 2069 (m7G2069) of 23S rRNA. This is Ribosomal RNA large subunit methyltransferase K/L from Shigella sonnei (strain Ss046).